We begin with the raw amino-acid sequence, 935 residues long: Isoleucine--tRNA ligase (935 aa).

Residues 58–68 carry the 'HIGH' region motif; it reads PYANGSIHVGH. Residue Glu558 coordinates L-isoleucyl-5'-AMP. The 'KMSKS' region signature appears at 599-603; it reads KMSKS. ATP is bound at residue Lys602. Zn(2+) contacts are provided by Cys897, Cys900, Cys917, and Cys920.

This sequence belongs to the class-I aminoacyl-tRNA synthetase family. IleS type 1 subfamily. In terms of assembly, monomer. It depends on Zn(2+) as a cofactor.

It is found in the cytoplasm. It carries out the reaction tRNA(Ile) + L-isoleucine + ATP = L-isoleucyl-tRNA(Ile) + AMP + diphosphate. In terms of biological role, catalyzes the attachment of isoleucine to tRNA(Ile). As IleRS can inadvertently accommodate and process structurally similar amino acids such as valine, to avoid such errors it has two additional distinct tRNA(Ile)-dependent editing activities. One activity is designated as 'pretransfer' editing and involves the hydrolysis of activated Val-AMP. The other activity is designated 'posttransfer' editing and involves deacylation of mischarged Val-tRNA(Ile). This Francisella philomiragia subsp. philomiragia (strain ATCC 25017 / CCUG 19701 / FSC 153 / O#319-036) protein is Isoleucine--tRNA ligase.